The following is a 498-amino-acid chain: Cytochrome P450 monooxygenase ltmP (498 aa).

Residues Met-1–Gly-21 form the signal peptide. The N-linked (GlcNAc...) asparagine glycan is linked to Asn-420. Cys-435 is a binding site for heme.

The protein belongs to the cytochrome P450 family. Heme serves as cofactor.

It functions in the pathway secondary metabolite biosynthesis. Cytochrome P450 monooxygenase; part of the gene clusters that mediates the biosynthesis of lolitrems, indole-diterpene mycotoxins that are potent tremorgens in mammals, and are synthesized by clavicipitaceous fungal endophytes in association with their grass hosts. The geranylgeranyl diphosphate (GGPP) synthase ltmG is proposed to catalyze the first step in lolitrem biosynthesis. LtmG catalyzes a series of iterative condensations of isopentenyl diphosphate (IPP) with dimethylallyl diphosphate (DMAPP), geranyl diphosphate (GPP), and farnesyl diphosphate (FPP), to form GGPP. GGPP then condenses with indole-3-glycerol phosphate to form 3-geranylgeranylindole, an acyclic intermediate, to be incorporated into paxilline. Either ltmG or ltmC could be responsible for this step, as both are putative prenyl transferases. The FAD-dependent monooxygenase ltmM then catalyzes the epoxidation of the two terminal alkenes of the geranylgeranyl moiety, which is subsequently cyclized by ltmB, to paspaline. The cytochrome P450 monooxygenases ltmQ and ltmP can sequentially oxidize paspaline to terpendole E and terpendole F. Alternatively, ltmP converts paspaline to an intermediate which is oxidized by ltmQ to terpendole F. LtmF, ltmK, ltmE and ltmJ appear to be unique to the epichloe endophytes. The prenyltransferase ltmF is involved in the 27-hydroxyl-O-prenylation. The cytochrome P450 monooxygenase ltmK is required for the oxidative acetal ring formation. The multi-functional prenyltransferase ltmE is required for C20- and C21-prenylations of the indole ring of paspalanes and acts together with the cytochrome P450 monooxygenase ltmJ to yield lolitremanes by multiple oxidations and ring closures. The stereoisomer pairs of lolitriol and lolitrem N or lolitrem B and lolitrem F may be attributed to variations in the way in which ring closure can occur under the action of ltmJ. While the major product of this pathway is lolitrem B, the prenyl transferases and cytochrome P450 monooxygenases identified in this pathway have a remarkable versatility in their regio- and stereo-specificities to generate a diverse range of metabolites that are products of a metabolic grid rather than a linear pathway. The polypeptide is Cytochrome P450 monooxygenase ltmP (Epichloe festucae var. lolii (Neotyphodium lolii)).